A 143-amino-acid polypeptide reads, in one-letter code: Myosin 1 light chain cam2 (143 aa).

3 EF-hand domains span residues Glu6–Asn41, Glu75–Lys110, and Leu111–Lys143.

The protein belongs to the calmodulin family. As to quaternary structure, interacts with myo1 and pik1.

It is found in the cytoplasm. Its subcellular location is the prospore membrane. Plays a role in meiosis and sporulation. This chain is Myosin 1 light chain cam2, found in Schizosaccharomyces pombe (strain 972 / ATCC 24843) (Fission yeast).